A 168-amino-acid polypeptide reads, in one-letter code: uncharacterized protein (168 aa).

Positions 1 to 21 are cleaved as a signal peptide; that stretch reads MVYEVLAVVSGGLLGFGVTWA.

This is an uncharacterized protein from Archaeoglobus fulgidus (strain ATCC 49558 / DSM 4304 / JCM 9628 / NBRC 100126 / VC-16).